A 110-amino-acid polypeptide reads, in one-letter code: UPF0122 protein SERP0802 (110 aa).

This sequence belongs to the UPF0122 family.

Its function is as follows. Might take part in the signal recognition particle (SRP) pathway. This is inferred from the conservation of its genetic proximity to ftsY/ffh. May be a regulatory protein. This is UPF0122 protein SERP0802 from Staphylococcus epidermidis (strain ATCC 35984 / DSM 28319 / BCRC 17069 / CCUG 31568 / BM 3577 / RP62A).